The chain runs to 348 residues: Actin maturation protease (348 aa).

Residues 1–18 (MISPCSPPLEPPVPPPET) are compositionally biased toward pro residues. The interval 1 to 64 (MISPCSPPLE…LPPPPRTTGF (64 aa)) is disordered. Residues 34–48 (NLPELAFPPSSFQAS) show a composition bias toward low complexity. The span at 49–60 (VPPPPPLPPPPR) shows a compositional bias: pro residues. The interval 121-241 (SLIQEGPQCG…WAVSAGVLLG (121 aa)) is peptidase C39-like. Residue Cys129 is part of the active site. Phosphoserine is present on Ser313.

This sequence belongs to the ACTMAP family. As to quaternary structure, interacts (via N-terminus) with PFN2; the interaction may facilitate efficient cleavage of the acetylated N-terminus of immature actin. Interacts with PFN1.

Its subcellular location is the cytoplasm. It carries out the reaction N-terminal N(alpha)-acetyl-L-methionyl-L-aspartyl-[protein] + H2O = N-terminal L-aspartyl-[protein] + N-acetyl-L-methionine. The enzyme catalyses N-terminal N(alpha)-acetyl-L-methionyl-L-glutamyl-[protein] + H2O = N-terminal L-glutamyl-[protein] + N-acetyl-L-methionine. The catalysed reaction is N-terminal N(alpha)-acetyl-L-cysteinyl-L-aspartyl-[protein] + H2O = N-terminal L-aspartyl-[protein] + N-acetyl-L-cysteine. It catalyses the reaction N-terminal N(alpha)-acetyl-L-cysteinyl-L-glutamyl-[protein] + H2O = N-terminal L-glutamyl-[protein] + N-acetyl-L-cysteine. Functionally, actin maturation protease that specifically mediates the cleavage of immature acetylated N-terminal actin, thereby contributing to actin maturation. Cleaves N-terminal acetylated methionine of immature cytoplasmic beta- and gamma-actins ACTB and ACTG1 after translation. Cleaves N-terminal acetylated cysteine of muscle alpha-actins ACTA1, ACTC1 and ACTA2 after canonical removal of N-terminal methionine. This chain is Actin maturation protease, found in Bos taurus (Bovine).